Reading from the N-terminus, the 240-residue chain is Coatomer subunit delta (240 aa).

Low complexity predominate over residues 215–226; sequence AAAKASSAPKAK. The tract at residues 215-240 is disordered; it reads AAAKASSAPKAKGMQLGKKKNTSLLY. Residues 231–240 are compositionally biased toward basic residues; that stretch reads GKKKNTSLLY.

The protein belongs to the adaptor complexes medium subunit family. Delta-COP subfamily. Oligomeric complex that consists of at least the alpha, beta, beta', gamma, delta, epsilon and zeta subunits.

The protein resides in the cytoplasm. It localises to the nucleus. Functionally, the coatomer is a cytosolic protein complex that binds to dilysine motifs and reversibly associates with Golgi non-clathrin-coated vesicles, which further mediate biosynthetic protein transport from the ER, via the Golgi up to the trans Golgi network. Coatomer complex is required for budding from Golgi membranes, and is essential for the retrograde Golgi-to-ER transport of dilysine-tagged proteins. The sequence is that of Coatomer subunit delta (ret2) from Schizosaccharomyces pombe (strain 972 / ATCC 24843) (Fission yeast).